Consider the following 443-residue polypeptide: ATP-dependent protease ATPase subunit HslU (443 aa).

ATP contacts are provided by residues V18, 60 to 65, D255, E321, and R393; that span reads GVGKTE.

The protein belongs to the ClpX chaperone family. HslU subfamily. A double ring-shaped homohexamer of HslV is capped on each side by a ring-shaped HslU homohexamer. The assembly of the HslU/HslV complex is dependent on binding of ATP.

It localises to the cytoplasm. In terms of biological role, ATPase subunit of a proteasome-like degradation complex; this subunit has chaperone activity. The binding of ATP and its subsequent hydrolysis by HslU are essential for unfolding of protein substrates subsequently hydrolyzed by HslV. HslU recognizes the N-terminal part of its protein substrates and unfolds these before they are guided to HslV for hydrolysis. The chain is ATP-dependent protease ATPase subunit HslU from Colwellia psychrerythraea (strain 34H / ATCC BAA-681) (Vibrio psychroerythus).